The primary structure comprises 348 residues: Large ribosomal subunit protein uL10 (348 aa).

The interval 291 to 348 is disordered; sequence LPEELRGVSAADTGAAEEEESTDEEAADADQADAAEDDDAADDDGDDEDAGDALGSLF. Residues 305–341 are compositionally biased toward acidic residues; it reads AAEEEESTDEEAADADQADAAEDDDAADDDGDDEDAG.

This sequence belongs to the universal ribosomal protein uL10 family. As to quaternary structure, part of the 50S ribosomal subunit. Forms part of the ribosomal stalk which helps the ribosome interact with GTP-bound translation factors. Forms a heptameric L10(L12)2(L12)2(L12)2 complex, where L10 forms an elongated spine to which the L12 dimers bind in a sequential fashion.

Functionally, forms part of the ribosomal stalk, playing a central role in the interaction of the ribosome with GTP-bound translation factors. The polypeptide is Large ribosomal subunit protein uL10 (Haloferax volcanii (strain ATCC 29605 / DSM 3757 / JCM 8879 / NBRC 14742 / NCIMB 2012 / VKM B-1768 / DS2) (Halobacterium volcanii)).